Reading from the N-terminus, the 250-residue chain is tRNA (guanine-N(1)-)-methyltransferase (250 aa).

Residues glycine 116 and 136 to 141 contribute to the S-adenosyl-L-methionine site; that span reads IGDYVL.

This sequence belongs to the RNA methyltransferase TrmD family. Homodimer.

It localises to the cytoplasm. It catalyses the reaction guanosine(37) in tRNA + S-adenosyl-L-methionine = N(1)-methylguanosine(37) in tRNA + S-adenosyl-L-homocysteine + H(+). Functionally, specifically methylates guanosine-37 in various tRNAs. This Stutzerimonas stutzeri (strain A1501) (Pseudomonas stutzeri) protein is tRNA (guanine-N(1)-)-methyltransferase.